Consider the following 138-residue polypeptide: Putative pre-16S rRNA nuclease (138 aa).

Belongs to the YqgF nuclease family.

The protein resides in the cytoplasm. Could be a nuclease involved in processing of the 5'-end of pre-16S rRNA. The chain is Putative pre-16S rRNA nuclease from Geobacillus sp. (strain WCH70).